We begin with the raw amino-acid sequence, 444 residues long: U-box domain-containing protein 31 (444 aa).

The region spanning 59 to 133 (EIPSVFICPI…YTWFSQKYVL (75 aa)) is the U-box domain. 2 ARM repeats span residues 301–340 (KQVRNLLVRIGAVPQLVDVLPCLDVECLESALFVLDSLCL) and 343–382 (EGRIALKDSVNTIPHTVRLLMKVSEKCTNYAISILWSVCK).

It carries out the reaction S-ubiquitinyl-[E2 ubiquitin-conjugating enzyme]-L-cysteine + [acceptor protein]-L-lysine = [E2 ubiquitin-conjugating enzyme]-L-cysteine + N(6)-ubiquitinyl-[acceptor protein]-L-lysine.. Its pathway is protein modification; protein ubiquitination. Its function is as follows. Functions as an E3 ubiquitin ligase. The sequence is that of U-box domain-containing protein 31 (PUB31) from Arabidopsis thaliana (Mouse-ear cress).